We begin with the raw amino-acid sequence, 230 residues long: MREERPIIALDFPSFDDVKAFLEHFPEDEKLFVKIGMEFFYAIGPEIVHYLKGLGHSIFLDLKLHDIPNTVRSAMSVLGTFGIDMVTVHAAGGVEMMSEAKKVLGDKAKLVAVTQLTSTSEEDMRDCQNIQTTVQESVVNYARKAKEAGLDGVVCSAQEVELIKAATAEDFLCVTPGIRPAGSEIGDQKRVMTPQEAHQIGSDYIVVGRPIIQAENPWDAYHEIKKQWNS.

Substrate-binding positions include Asp-11, Lys-34, 61-70 (DLKLHDIPNT), Thr-117, Arg-179, Gln-188, Gly-208, and Arg-209. Lys-63 (proton donor) is an active-site residue.

This sequence belongs to the OMP decarboxylase family. Type 1 subfamily. As to quaternary structure, homodimer.

It catalyses the reaction orotidine 5'-phosphate + H(+) = UMP + CO2. It functions in the pathway pyrimidine metabolism; UMP biosynthesis via de novo pathway; UMP from orotate: step 2/2. Catalyzes the decarboxylation of orotidine 5'-monophosphate (OMP) to uridine 5'-monophosphate (UMP). This is Orotidine 5'-phosphate decarboxylase from Streptococcus gordonii (strain Challis / ATCC 35105 / BCRC 15272 / CH1 / DL1 / V288).